A 182-amino-acid chain; its full sequence is UPF0398 protein RBAM_020340 (182 aa).

It belongs to the UPF0398 family.

This is UPF0398 protein RBAM_020340 from Bacillus velezensis (strain DSM 23117 / BGSC 10A6 / LMG 26770 / FZB42) (Bacillus amyloliquefaciens subsp. plantarum).